A 308-amino-acid chain; its full sequence is Taste receptor type 2 member 107 (308 aa).

The Extracellular segment spans residues 1-7; sequence MLNSAEG. The helical transmembrane segment at 8–28 threads the bilayer; that stretch reads ILLCVVTSEAVLGVLGDTYIA. The Cytoplasmic portion of the chain corresponds to 29 to 43; it reads LFNCMDYAKNKKLSK. A helical membrane pass occupies residues 44 to 64; sequence IGFILIGLAISRIGVVWIIIL. Residues 65–87 are Extracellular-facing; the sequence is QGYIQVFFPHMLTSGNITEYITY. Asn80 is a glycosylation site (N-linked (GlcNAc...) asparagine). Residues 88 to 108 traverse the membrane as a helical segment; it reads IWVFLNHLSVWFVTNLNILYF. Over 109–125 the chain is Cytoplasmic; sequence LKIANFSNSVFLWLKRR. The helical transmembrane segment at 126–146 threads the bilayer; that stretch reads VNAVFIFLSGCLLTSWLLCFP. The Extracellular portion of the chain corresponds to 147-180; it reads QMTKILQNSKMHQRNTSWVHQRKNYFLINQSVTN. 2 N-linked (GlcNAc...) asparagine glycosylation sites follow: Asn161 and Asn175. Residues 181–201 traverse the membrane as a helical segment; that stretch reads LGIFFFIIVSLITCFLLIVFL. Topologically, residues 202-232 are cytoplasmic; that stretch reads WRHVRQMHSDVSGFRDHSTKVHVKAMKFLIS. A helical transmembrane segment spans residues 233-253; that stretch reads FMVFFILHFVGLSIEVLCFIL. At 254-258 the chain is on the extracellular side; the sequence is PQNKL. The helical transmembrane segment at 259 to 279 threads the bilayer; the sequence is LFITGLTATCLYPCGHSIIVI. At 280 to 308 the chain is on the cytoplasmic side; the sequence is LGNKQLKQASLKALQQLKCCETKGNFRVK.

It belongs to the G-protein coupled receptor T2R family.

Its subcellular location is the membrane. In terms of biological role, putative taste receptor which may play a role in the perception of bitterness. The polypeptide is Taste receptor type 2 member 107 (Mus musculus (Mouse)).